The following is a 173-amino-acid chain: Putative C-type lectin protein FPV198 (173 aa).

A C-type lectin domain is found at 50–169; that stretch reads GMSGWVQINN…CNKKHTGICF (120 aa).

In Vertebrata (FPV), this protein is Putative C-type lectin protein FPV198.